A 923-amino-acid polypeptide reads, in one-letter code: Alanine--tRNA ligase (923 aa).

Zn(2+)-binding residues include His-611, His-615, Cys-714, and His-718. Residues 886–903 show a composition bias toward gly residues; sequence VGGGGGGRPNMARGGGTD. Positions 886–909 are disordered; that stretch reads VGGGGGGRPNMARGGGTDPSGMDN.

Belongs to the class-II aminoacyl-tRNA synthetase family. Zn(2+) is required as a cofactor.

Its subcellular location is the cytoplasm. It catalyses the reaction tRNA(Ala) + L-alanine + ATP = L-alanyl-tRNA(Ala) + AMP + diphosphate. Catalyzes the attachment of alanine to tRNA(Ala) in a two-step reaction: alanine is first activated by ATP to form Ala-AMP and then transferred to the acceptor end of tRNA(Ala). Also edits incorrectly charged Ser-tRNA(Ala) and Gly-tRNA(Ala) via its editing domain. The sequence is that of Alanine--tRNA ligase from Methanococcoides burtonii (strain DSM 6242 / NBRC 107633 / OCM 468 / ACE-M).